The primary structure comprises 581 residues: Lipoprotein LpqB (581 aa).

Residues 1-23 form the signal peptide; the sequence is MRNHVSRYLTALIAVGCAATTAA. The N-palmitoyl cysteine moiety is linked to residue Cys24. The S-diacylglycerol cysteine moiety is linked to residue Cys24.

This sequence belongs to the LpqB lipoprotein family.

The protein localises to the cell membrane. In Corynebacterium diphtheriae (strain ATCC 700971 / NCTC 13129 / Biotype gravis), this protein is Lipoprotein LpqB.